Here is a 321-residue protein sequence, read N- to C-terminus: Major immediate early protein (321 aa).

Residues 86 to 139 (CSVCLETYSQQSNDTCPFLIPTTCDHGFCFKCVINLQSNAMNIPHSTVCCPLCN) form an RING-type zinc finger. The leucine-zipper stretch occupies residues 228–249 (LIEENTRLNEQIQELQHQVRTL).

Its subcellular location is the host nucleus. Plays some regulatory role in both viral DNA replication and transcriptional transactivation. This is Major immediate early protein (PE38) from Lepidoptera (butterflies and moths).